The following is a 456-amino-acid chain: Argininosuccinate lyase (456 aa).

Belongs to the lyase 1 family. Argininosuccinate lyase subfamily.

It localises to the cytoplasm. It catalyses the reaction 2-(N(omega)-L-arginino)succinate = fumarate + L-arginine. Its pathway is amino-acid biosynthesis; L-arginine biosynthesis; L-arginine from L-ornithine and carbamoyl phosphate: step 3/3. The polypeptide is Argininosuccinate lyase (Shewanella pealeana (strain ATCC 700345 / ANG-SQ1)).